Consider the following 387-residue polypeptide: Eukaryotic translation initiation factor 3 subunit M (387 aa).

Residues 181-340 (LSSKVMIELL…RKVHISSTMH (160 aa)) enclose the PCI domain.

It belongs to the eIF-3 subunit M family. As to quaternary structure, component of the eukaryotic translation initiation factor 3 (eIF-3) complex. The eIF-3 complex interacts with pix.

Its subcellular location is the cytoplasm. It localises to the golgi apparatus. Component of the eukaryotic translation initiation factor 3 (eIF-3) complex, which is involved in protein synthesis of a specialized repertoire of mRNAs and, together with other initiation factors, stimulates binding of mRNA and methionyl-tRNAi to the 40S ribosome. The eIF-3 complex specifically targets and initiates translation of a subset of mRNAs involved in cell proliferation. The polypeptide is Eukaryotic translation initiation factor 3 subunit M (Drosophila persimilis (Fruit fly)).